Consider the following 353-residue polypeptide: Photosystem II protein D1 (353 aa).

Residue Thr2 is modified to N-acetylthreonine. Thr2 carries the post-translational modification Phosphothreonine. The next 3 helical transmembrane spans lie at 29 to 46 (YIGWFGVLMIPTLLTATS), 118 to 133 (HFLLGVACYMGREWEL), and 142 to 156 (WIAVAYSAPVAAATA). His118 contacts chlorophyll a. A pheophytin a-binding site is contributed by Tyr126. The [CaMn4O5] cluster site is built by Asp170 and Glu189. A helical membrane pass occupies residues 197 to 218 (FHMLGVAGVFGGSLFSAMHGSL). His198 serves as a coordination point for chlorophyll a. A quinone is bound by residues His215 and 264-265 (SF). Residue His215 participates in Fe cation binding. His272 provides a ligand contact to Fe cation. A helical transmembrane segment spans residues 274–288 (FLAAWPVVGIWFTAL). [CaMn4O5] cluster-binding residues include His332, Glu333, Asp342, and Ala344. The propeptide occupies 345–353 (AVEAPSTNG).

It belongs to the reaction center PufL/M/PsbA/D family. In terms of assembly, PSII is composed of 1 copy each of membrane proteins PsbA, PsbB, PsbC, PsbD, PsbE, PsbF, PsbH, PsbI, PsbJ, PsbK, PsbL, PsbM, PsbT, PsbX, PsbY, PsbZ, Psb30/Ycf12, at least 3 peripheral proteins of the oxygen-evolving complex and a large number of cofactors. It forms dimeric complexes. Requires The D1/D2 heterodimer binds P680, chlorophylls that are the primary electron donor of PSII, and subsequent electron acceptors. It shares a non-heme iron and each subunit binds pheophytin, quinone, additional chlorophylls, carotenoids and lipids. D1 provides most of the ligands for the Mn4-Ca-O5 cluster of the oxygen-evolving complex (OEC). There is also a Cl(-1) ion associated with D1 and D2, which is required for oxygen evolution. The PSII complex binds additional chlorophylls, carotenoids and specific lipids. as cofactor. Tyr-161 forms a radical intermediate that is referred to as redox-active TyrZ, YZ or Y-Z. In terms of processing, C-terminally processed by CTPA; processing is essential to allow assembly of the oxygen-evolving complex and thus photosynthetic growth.

The protein localises to the plastid. It localises to the chloroplast thylakoid membrane. It carries out the reaction 2 a plastoquinone + 4 hnu + 2 H2O = 2 a plastoquinol + O2. In terms of biological role, photosystem II (PSII) is a light-driven water:plastoquinone oxidoreductase that uses light energy to abstract electrons from H(2)O, generating O(2) and a proton gradient subsequently used for ATP formation. It consists of a core antenna complex that captures photons, and an electron transfer chain that converts photonic excitation into a charge separation. The D1/D2 (PsbA/PsbD) reaction center heterodimer binds P680, the primary electron donor of PSII as well as several subsequent electron acceptors. In Nymphaea alba (White water-lily), this protein is Photosystem II protein D1.